Here is a 219-residue protein sequence, read N- to C-terminus: uncharacterized protein (219 aa).

2 helical membrane-spanning segments follow: residues 8–28 and 194–214; these read MILFLLVGLAVVLSGCATLSV and GIPGFEAALAIVGLLAAGLLF.

The protein localises to the cell membrane. This is an uncharacterized protein from Archaeoglobus fulgidus (strain ATCC 49558 / DSM 4304 / JCM 9628 / NBRC 100126 / VC-16).